The primary structure comprises 263 residues: Post-GPI attachment to proteins factor 2 (263 aa).

A run of 6 helical transmembrane segments spans residues Phe-16–Leu-36, Tyr-69–Phe-89, Phe-109–Thr-129, Cys-143–Ser-163, Tyr-180–Trp-200, and Pro-208–Phe-228.

This sequence belongs to the PGAP2 family.

The protein localises to the golgi apparatus membrane. Its subcellular location is the endoplasmic reticulum membrane. Functionally, involved in the lipid remodeling steps of GPI-anchor maturation. Required for stable expression of GPI-anchored proteins at the cell surface. In Caenorhabditis briggsae, this protein is Post-GPI attachment to proteins factor 2.